A 950-amino-acid chain; its full sequence is ABC transporter A family member 9 (950 aa).

The next 6 helical transmembrane spans lie at 31–51 (ATCL…SIEE), 223–243 (IISA…MFGF), 276–296 (WLIW…LFGM), 308–328 (FVLV…LAFA), 342–362 (VGFL…AGFP), and 426–446 (IWLV…DNII). The region spanning 520-765 (VQIHGLAKTY…FGTGFVATVS (246 aa)) is the ABC transporter domain. 566-573 (GPNGAGKT) serves as a coordination point for ATP.

The protein belongs to the ABC transporter superfamily. ABCA family. CPR flippase (TC 3.A.1.211) subfamily. Highly expressed in siliques. Detected in seedlings, rosette leaves, stems and flowers.

It is found in the endoplasmic reticulum membrane. In terms of biological role, mediates the transport of acyl-CoAs and/or free fatty acids to the endoplasmic reticulum. Has no effect on the selectivity of fatty acid incorporation into triacylglycerol or further desaturation steps. The chain is ABC transporter A family member 9 (ABCA9) from Arabidopsis thaliana (Mouse-ear cress).